A 235-amino-acid polypeptide reads, in one-letter code: Acyl-protein thioesterase 1 (235 aa).

Catalysis depends on charge relay system residues serine 119, aspartate 172, and histidine 206.

It belongs to the AB hydrolase superfamily. AB hydrolase 2 family.

It is found in the cytoplasm. It localises to the nucleus. It carries out the reaction S-hexadecanoyl-L-cysteinyl-[protein] + H2O = L-cysteinyl-[protein] + hexadecanoate + H(+). In terms of biological role, hydrolyzes fatty acids from S-acylated cysteine residues in proteins with a strong preference for palmitoylated G-alpha proteins over other acyl substrates. Mediates the deacylation of G-alpha proteins such as GPA1 in vivo, but has weak or no activity toward palmitoylated Ras proteins. Has weak lysophospholipase activity in vitro; however such activity may not exist in vivo. In Eremothecium gossypii (strain ATCC 10895 / CBS 109.51 / FGSC 9923 / NRRL Y-1056) (Yeast), this protein is Acyl-protein thioesterase 1.